A 324-amino-acid polypeptide reads, in one-letter code: tRNA-modifying protein YgfZ (324 aa).

Trp184 is a folate binding site.

This sequence belongs to the tRNA-modifying YgfZ family.

The protein localises to the cytoplasm. Functionally, folate-binding protein involved in regulating the level of ATP-DnaA and in the modification of some tRNAs. It is probably a key factor in regulatory networks that act via tRNA modification, such as initiation of chromosomal replication. In Vibrio vulnificus (strain YJ016), this protein is tRNA-modifying protein YgfZ.